Here is a 314-residue protein sequence, read N- to C-terminus: Carbamate kinase (314 aa).

This sequence belongs to the carbamate kinase family. As to quaternary structure, homodimer.

It localises to the cytoplasm. The catalysed reaction is hydrogencarbonate + NH4(+) + ATP = carbamoyl phosphate + ADP + H2O + H(+). This chain is Carbamate kinase (cpkA), found in Pyrococcus horikoshii (strain ATCC 700860 / DSM 12428 / JCM 9974 / NBRC 100139 / OT-3).